The chain runs to 744 residues: Translation initiation factor IF-2, chloroplastic (744 aa).

Residues 113-146 (NSEGSFKSGKQKKKEKGKHKQNVNKDIHHTKNNR) are disordered. Basic residues predominate over residues 121 to 134 (GKQKKKEKGKHKQN). Residues 244–417 (NRAPIVTILG…CSLAEFINLK (174 aa)) form the tr-type G domain. Residues 253-260 (GHVDHGKT) are G1. Residue 253 to 260 (GHVDHGKT) coordinates GTP. A G2 region spans residues 278–282 (GITQS). Positions 303 to 306 (DTPG) are G3. GTP is bound by residues 303-307 (DTPGH) and 357-360 (NKID). Positions 357–360 (NKID) are G4. The interval 393-395 (SAL) is G5.

It belongs to the TRAFAC class translation factor GTPase superfamily. Classic translation factor GTPase family. IF-2 subfamily.

The protein localises to the plastid. The protein resides in the chloroplast. Functionally, one of the essential components for the initiation of protein synthesis. Protects formylmethionyl-tRNA from spontaneous hydrolysis and promotes its binding to the 30S ribosomal subunits. Also involved in the hydrolysis of GTP during the formation of the 70S ribosomal complex. In Gracilaria tenuistipitata var. liui (Red alga), this protein is Translation initiation factor IF-2, chloroplastic (infB).